Here is a 66-residue protein sequence, read N- to C-terminus: Cold shock-like protein CspLB (66 aa).

Residues 4-63 (GTVKWFNSEKGFGFIEVEGGDDVFVHFSAIEGEGFKTLDEGQSVEFEIVEGQRGPQAEKV) enclose the CSD domain.

Homodimer.

It localises to the cytoplasm. In Listeria monocytogenes serovar 1/2a (strain ATCC BAA-679 / EGD-e), this protein is Cold shock-like protein CspLB (cspLB).